The following is a 303-amino-acid chain: Pseudouridine-5'-phosphate glycosidase (303 aa).

The Proton donor role is filled by Glu24. Substrate is bound by residues Lys85 and Val105. Asp137 contributes to the Mn(2+) binding site. Residue 139-141 coordinates substrate; the sequence is SAD. Lys158 functions as the Nucleophile in the catalytic mechanism.

This sequence belongs to the pseudouridine-5'-phosphate glycosidase family. As to quaternary structure, homotrimer. Requires Mn(2+) as cofactor.

It carries out the reaction D-ribose 5-phosphate + uracil = psi-UMP + H2O. Functionally, catalyzes the reversible cleavage of pseudouridine 5'-phosphate (PsiMP) to ribose 5-phosphate and uracil. Functions biologically in the cleavage direction, as part of a pseudouridine degradation pathway. This is Pseudouridine-5'-phosphate glycosidase from Herpetosiphon aurantiacus (strain ATCC 23779 / DSM 785 / 114-95).